A 419-amino-acid chain; its full sequence is Chaperone protein dnaJ 2 (419 aa).

The J domain occupies 14 to 75 (KFYEILGVPK…EKREIYDQYG (62 aa)). The segment at 136-220 (GTTKKLSLSR…CKGEKVVSEK (85 aa)) adopts a CR-type zinc-finger fold. Residues cysteine 149, cysteine 152, cysteine 165, cysteine 168, cysteine 192, cysteine 195, cysteine 208, and cysteine 211 each contribute to the Zn(2+) site. 4 CXXCXGXG motif repeats span residues 149 to 156 (CSKCNGKG), 165 to 172 (CGGCQGSG), 192 to 199 (CNDCKGTG), and 208 to 215 (CPQCKGEK). Residues 378-391 (TTLHDVNIEDEMKR) show a composition bias toward basic and acidic residues. Residues 378–419 (TTLHDVNIEDEMKRKAQAQREAYDDDEEDHPGGAQRVQCAQQ) are disordered. The residue at position 416 (cysteine 416) is a Cysteine methyl ester. A lipid anchor (S-farnesyl cysteine) is attached at cysteine 416. Residues 417-419 (AQQ) constitute a propeptide, removed in mature form.

Belongs to the DnaJ family. A/I subfamily. In terms of assembly, homodimer. The cofactor is Zn(2+). Post-translationally, farnesylated. Expressed in both etiolated and light-grown tissues.

Its subcellular location is the membrane. Its function is as follows. Plays a continuous role in plant development probably in the structural organization of compartments. This Arabidopsis thaliana (Mouse-ear cress) protein is Chaperone protein dnaJ 2 (ATJ2).